A 21-amino-acid polypeptide reads, in one-letter code: Hemocyanin subunit 4 (21 aa).

It belongs to the tyrosinase family. Hemocyanin subfamily. In terms of tissue distribution, hemolymph.

It localises to the secreted. The protein resides in the extracellular space. Hemocyanins are copper-containing oxygen carriers occurring freely dissolved in the hemolymph of many mollusks and arthropods. The chain is Hemocyanin subunit 4 from Maja squinado (Mediterranean spider crab).